The sequence spans 479 residues: Outer membrane protein OprJ (479 aa).

A signal peptide spans Met1–Ala19. The N-palmitoyl cysteine moiety is linked to residue Cys20. The S-diacylglycerol cysteine moiety is linked to residue Cys20. A disordered region spans residues Leu102 to Asn121.

It belongs to the outer membrane factor (OMF) (TC 1.B.17) family.

It is found in the cell outer membrane. Its function is as follows. Channel-forming component of a multidrug resistance efflux pump. This is Outer membrane protein OprJ (oprJ) from Pseudomonas aeruginosa (strain ATCC 15692 / DSM 22644 / CIP 104116 / JCM 14847 / LMG 12228 / 1C / PRS 101 / PAO1).